Here is a 214-residue protein sequence, read N- to C-terminus: Probable transaldolase (214 aa).

K83 (schiff-base intermediate with substrate) is an active-site residue.

The protein belongs to the transaldolase family. Type 3B subfamily.

It localises to the cytoplasm. The catalysed reaction is D-sedoheptulose 7-phosphate + D-glyceraldehyde 3-phosphate = D-erythrose 4-phosphate + beta-D-fructose 6-phosphate. The protein operates within carbohydrate degradation; pentose phosphate pathway; D-glyceraldehyde 3-phosphate and beta-D-fructose 6-phosphate from D-ribose 5-phosphate and D-xylulose 5-phosphate (non-oxidative stage): step 2/3. Its function is as follows. Transaldolase is important for the balance of metabolites in the pentose-phosphate pathway. In Desulfotalea psychrophila (strain LSv54 / DSM 12343), this protein is Probable transaldolase.